The chain runs to 250 residues: ATP synthase subunit a (250 aa).

A run of 5 helical transmembrane segments spans residues 27-47 (TDTV…AFYL), 83-103 (IAPF…ISNW), 129-149 (INYV…AGIW), 191-211 (IFAG…IMWA), and 219-239 (FDLF…ILYF).

The protein belongs to the ATPase A chain family. In terms of assembly, F-type ATPases have 2 components, CF(1) - the catalytic core - and CF(0) - the membrane proton channel. CF(1) has five subunits: alpha(3), beta(3), gamma(1), delta(1), epsilon(1). CF(0) has three main subunits: a(1), b(2) and c(9-12). The alpha and beta chains form an alternating ring which encloses part of the gamma chain. CF(1) is attached to CF(0) by a central stalk formed by the gamma and epsilon chains, while a peripheral stalk is formed by the delta and b chains.

It is found in the cell membrane. Key component of the proton channel; it plays a direct role in the translocation of protons across the membrane. This Mycobacterium ulcerans (strain Agy99) protein is ATP synthase subunit a.